The primary structure comprises 236 residues: uncharacterized protein (236 aa).

A signal peptide spans 1-24 (MRKKHFNMILKLALISSLLALAAS). Asn-59, Asn-171, and Asn-197 each carry an N-linked (GlcNAc...) asparagine glycan.

It localises to the secreted. This is an uncharacterized protein from Caenorhabditis elegans.